The following is a 647-amino-acid chain: RalA-binding protein 1 (647 aa).

Disordered stretches follow at residues 1–151 (MTEC…EKKC) and 163–186 (WKEK…APSL). Threonine 2 carries the post-translational modification N-acetylthreonine. Positions 24-33 (LTRTPSSEEI) are enriched in polar residues. Phosphoserine occurs at positions 29, 30, and 34. Threonine 44 carries the post-translational modification Phosphothreonine. 2 positions are modified to phosphoserine: serine 48 and serine 62. Over residues 52–68 (DILHEPPDIVSDDEKDH) the composition is skewed to basic and acidic residues. Position 69 to 74 (69 to 74 (GKKKGK)) interacts with ATP. Over residues 69-79 (GKKKGKFKKKE) the composition is skewed to basic residues. Residues serine 92 and serine 93 each carry the phosphoserine modification. A compositionally biased stretch (basic residues) spans 102–118 (KMKRSKGIHVFKKPSFS). A nuclear localization signal region spans residues 102 to 119 (KMKRSKGIHVFKKPSFSK). The segment covering 119-151 (KKKEKDFKIKEKPKEEKHKEEKHKEEKHKEKKC) has biased composition (basic and acidic residues). The segment at 154-219 (FTAADVVKQW…PAVFRECVDY (66 aa)) is mediates association with membranes and could form transmembrane domains. Residues 192-380 (APFADAVERT…VLLKQVTRPL (189 aa)) form the Rho-GAP domain. The mediates interaction with RALA and RALB stretch occupies residues 403-499 (RRQEFLLNCL…LTEQEELLAM (97 aa)). 418-425 (GGIKDFSK) contacts ATP. A phosphoserine mark is found at serine 461 and serine 463. The tract at residues 500–647 (EQFLRRQIAS…PSKDRKETPI (148 aa)) is mediates interaction with REPS1 and REPS2. Disordered regions lie at residues 525–550 (QSRQ…DEEE) and 601–647 (EQQL…ETPI). Over residues 535-550 (EEYSSDSESESEDEEE) the composition is skewed to acidic residues. Basic and acidic residues predominate over residues 628–647 (RAAKEQAKPSPSKDRKETPI). At serine 637 the chain carries Phosphoserine.

Interacts with the GTP-bound form of RALA (via effector domain); during mitosis, recruits RALBP1 to the mitochondrion where it promotes DNM1L phosphorylation and mitochondrial fission. Interacts with DNM1L; mediates its mitotic kinase cyclin B-CDK1-mediated phosphorylation during mitosis to promote mitochondrial fission. Interacts with the mitotic kinase cyclin B-CDK1 during mitosis. Interacts with the GTP-bound form of RALB (via effector domain). Interacts with REPS1; the interaction is direct and does not affect RALA-binding nor GTPase activator activity of RALBP1. Interacts with REPS2; the interaction is direct and does not affect RALA-binding nor GTPase activator activity of RALBP1. Interacts with EPN1, NUMB and TFAP2A during interphase and mitosis. Interacts with AP2M1; as part of the AP2 complex. Interacts with CDC42. Interacts with RAC1. Tyrosine-phosphorylated upon stimulation of cells with EGF. Post-translationally, may undergo proteolytic cleavage to give peptides which reassemble to form a transporter complex. Ubiquitously expressed.

It is found in the cell membrane. It localises to the cytoplasm. The protein localises to the cytosol. Its subcellular location is the cytoskeleton. The protein resides in the spindle pole. It is found in the nucleus. It localises to the mitochondrion. It catalyses the reaction an S-substituted glutathione(in) + ATP + H2O = an S-substituted glutathione(out) + ADP + phosphate + H(+). The catalysed reaction is ATP + H2O + xenobioticSide 1 = ADP + phosphate + xenobioticSide 2.. The enzyme catalyses leukotriene C4(in) + ATP + H2O = leukotriene C4(out) + ADP + phosphate + H(+). Multifunctional protein that functions as a downstream effector of RALA and RALB. As a GTPase-activating protein/GAP can inactivate CDC42 and RAC1 by stimulating their GTPase activity. As part of the Ral signaling pathway, may also regulate ligand-dependent EGF and insulin receptors-mediated endocytosis. During mitosis, may act as a scaffold protein in the phosphorylation of EPSIN/EPN1 by the mitotic kinase cyclin B-CDK1, preventing endocytosis during that phase of the cell cycle. During mitosis, also controls mitochondrial fission as an effector of RALA. Recruited to mitochondrion by RALA, acts as a scaffold to foster the mitotic kinase cyclin B-CDK1-mediated phosphorylation and activation of DNM1L. In terms of biological role, could also function as a primary ATP-dependent active transporter for glutathione conjugates of electrophiles. May also actively catalyze the efflux of a wide range of substrates including xenobiotics like doxorubicin (DOX) contributing to cell multidrug resistance. This chain is RalA-binding protein 1, found in Rattus norvegicus (Rat).